Reading from the N-terminus, the 554-residue chain is Dihydroxy-acid dehydratase (554 aa).

D78 is a Mg(2+) binding site. C119 is a [2Fe-2S] cluster binding site. Positions 120 and 121 each coordinate Mg(2+). Residue K121 is modified to N6-carboxylysine. C192 serves as a coordination point for [2Fe-2S] cluster. E443 contacts Mg(2+). S469 serves as the catalytic Proton acceptor.

The protein belongs to the IlvD/Edd family. In terms of assembly, homodimer. [2Fe-2S] cluster is required as a cofactor. Requires Mg(2+) as cofactor.

The enzyme catalyses (2R)-2,3-dihydroxy-3-methylbutanoate = 3-methyl-2-oxobutanoate + H2O. The catalysed reaction is (2R,3R)-2,3-dihydroxy-3-methylpentanoate = (S)-3-methyl-2-oxopentanoate + H2O. Its pathway is amino-acid biosynthesis; L-isoleucine biosynthesis; L-isoleucine from 2-oxobutanoate: step 3/4. It participates in amino-acid biosynthesis; L-valine biosynthesis; L-valine from pyruvate: step 3/4. Functions in the biosynthesis of branched-chain amino acids. Catalyzes the dehydration of (2R,3R)-2,3-dihydroxy-3-methylpentanoate (2,3-dihydroxy-3-methylvalerate) into 2-oxo-3-methylpentanoate (2-oxo-3-methylvalerate) and of (2R)-2,3-dihydroxy-3-methylbutanoate (2,3-dihydroxyisovalerate) into 2-oxo-3-methylbutanoate (2-oxoisovalerate), the penultimate precursor to L-isoleucine and L-valine, respectively. The chain is Dihydroxy-acid dehydratase from Shouchella clausii (strain KSM-K16) (Alkalihalobacillus clausii).